Here is an 82-residue protein sequence, read N- to C-terminus: U-actitoxin-Oulsp2 (82 aa).

An N-terminal signal peptide occupies residues 1–21 (MNTKLVVVFLLSAILFVSVTA). Residues 22–46 (SRPGKDLERDEAYETYDDERPYFKR) constitute a propeptide that is removed on maturation. In terms of domain architecture, ShKT spans 48 to 82 (CKDNLPAATCSNVKANNNCSSEKYKTNCAKTCGEC). 3 disulfide bridges follow: Cys-48–Cys-82, Cys-57–Cys-75, and Cys-66–Cys-79. The interval 70-71 (KY) is theoritically crucial for binding to potassium channels.

It belongs to the sea anemone type 1 potassium channel toxin family. Type 1b subfamily.

Its subcellular location is the secreted. The protein resides in the nematocyst. Its function is as follows. Probable toxin with unknown function. In contrast to similar toxins, this toxin does not inhibit voltage-gated potassium channels (tested at 100 nM). Does not show antimicrobial activities against bacteria and yeasts. The polypeptide is U-actitoxin-Oulsp2 (Oulactis sp. (Sea anemone)).